We begin with the raw amino-acid sequence, 1400 residues long: DNA-directed RNA polymerase subunit beta' (1400 aa).

Positions 71, 73, 86, and 89 each coordinate Zn(2+). Positions 462, 464, and 466 each coordinate Mg(2+). Zn(2+)-binding residues include C810, C884, C891, and C894. The disordered stretch occupies residues 1378–1400 (EKQATIVPPAAPEAEPLALPPAE).

It belongs to the RNA polymerase beta' chain family. As to quaternary structure, the RNAP catalytic core consists of 2 alpha, 1 beta, 1 beta' and 1 omega subunit. When a sigma factor is associated with the core the holoenzyme is formed, which can initiate transcription. Requires Mg(2+) as cofactor. Zn(2+) serves as cofactor.

The enzyme catalyses RNA(n) + a ribonucleoside 5'-triphosphate = RNA(n+1) + diphosphate. Its function is as follows. DNA-dependent RNA polymerase catalyzes the transcription of DNA into RNA using the four ribonucleoside triphosphates as substrates. The polypeptide is DNA-directed RNA polymerase subunit beta' (Rhodopseudomonas palustris (strain BisB5)).